The primary structure comprises 108 residues: Phosphoribosyl-ATP pyrophosphatase (108 aa).

The interval 88-108 (VENELDRREGRSGIEEKASRK) is disordered. Residues 91–108 (ELDRREGRSGIEEKASRK) show a composition bias toward basic and acidic residues.

Belongs to the PRA-PH family.

It localises to the cytoplasm. The catalysed reaction is 1-(5-phospho-beta-D-ribosyl)-ATP + H2O = 1-(5-phospho-beta-D-ribosyl)-5'-AMP + diphosphate + H(+). Its pathway is amino-acid biosynthesis; L-histidine biosynthesis; L-histidine from 5-phospho-alpha-D-ribose 1-diphosphate: step 2/9. The chain is Phosphoribosyl-ATP pyrophosphatase from Paracoccus denitrificans (strain Pd 1222).